Here is a 172-residue protein sequence, read N- to C-terminus: Protein-export protein SecB (172 aa).

The disordered stretch occupies residues 152-172 (AQGAEGGNSGIVMPDGSQARH).

The protein belongs to the SecB family. Homotetramer, a dimer of dimers. One homotetramer interacts with 1 SecA dimer.

The protein localises to the cytoplasm. One of the proteins required for the normal export of preproteins out of the cell cytoplasm. It is a molecular chaperone that binds to a subset of precursor proteins, maintaining them in a translocation-competent state. It also specifically binds to its receptor SecA. This Cupriavidus necator (strain ATCC 17699 / DSM 428 / KCTC 22496 / NCIMB 10442 / H16 / Stanier 337) (Ralstonia eutropha) protein is Protein-export protein SecB.